The following is a 94-amino-acid chain: Alpha-elapitoxin-Nss2a (94 aa).

The first 21 residues, 1-21, serve as a signal peptide directing secretion; sequence MKTLLLTLVVVTIVCLDLGDS. Disulfide bonds link cysteine 24/cysteine 41, cysteine 34/cysteine 62, cysteine 47/cysteine 51, cysteine 66/cysteine 77, and cysteine 78/cysteine 83.

This sequence belongs to the three-finger toxin family. Long-chain subfamily. Type II alpha-neurotoxin sub-subfamily. In terms of tissue distribution, expressed by the venom gland.

It is found in the secreted. In terms of biological role, binds with high affinity to muscular (alpha-1/CHRNA1) and neuronal (alpha-7/CHRNA7) nicotinic acetylcholine receptor (nAChR) and inhibits acetylcholine from binding to the receptor, thereby impairing neuromuscular and neuronal transmission. The chain is Alpha-elapitoxin-Nss2a from Notechis scutatus scutatus (Mainland tiger snake).